Reading from the N-terminus, the 194-residue chain is uncharacterized protein (194 aa).

A helical transmembrane segment spans residues 17 to 37 (DVWLYLLVFGCLSVLVLVLVH).

Belongs to the IIV-6 307L family.

It is found in the membrane. This is an uncharacterized protein from Invertebrate iridescent virus 3 (IIV-3).